A 283-amino-acid polypeptide reads, in one-letter code: 2-dehydro-3-deoxyphosphooctonate aldolase (283 aa).

This sequence belongs to the KdsA family.

It localises to the cytoplasm. It carries out the reaction D-arabinose 5-phosphate + phosphoenolpyruvate + H2O = 3-deoxy-alpha-D-manno-2-octulosonate-8-phosphate + phosphate. Its pathway is carbohydrate biosynthesis; 3-deoxy-D-manno-octulosonate biosynthesis; 3-deoxy-D-manno-octulosonate from D-ribulose 5-phosphate: step 2/3. It functions in the pathway bacterial outer membrane biogenesis; lipopolysaccharide biosynthesis. The protein is 2-dehydro-3-deoxyphosphooctonate aldolase of Methylococcus capsulatus (strain ATCC 33009 / NCIMB 11132 / Bath).